A 305-amino-acid chain; its full sequence is L-lactate dehydrogenase (305 aa).

Residues Val-11, Asp-32, Lys-37, and 76–77 (GV) contribute to the NAD(+) site. Residues Gln-79, Arg-85, and 117-120 (NPVD) each bind substrate. Residues 115-117 (ATN) and Ser-140 contribute to the NAD(+) site. 145–148 (DTAR) lines the substrate pocket. Positions 150 and 165 each coordinate beta-D-fructose 1,6-bisphosphate. His-172 functions as the Proton acceptor in the catalytic mechanism. Tyr-218 bears the Phosphotyrosine mark. Position 227 (Thr-227) interacts with substrate.

Belongs to the LDH/MDH superfamily. LDH family. As to quaternary structure, homotetramer.

It is found in the cytoplasm. The catalysed reaction is (S)-lactate + NAD(+) = pyruvate + NADH + H(+). It functions in the pathway fermentation; pyruvate fermentation to lactate; (S)-lactate from pyruvate: step 1/1. Allosterically activated by fructose 1,6-bisphosphate (FBP). In terms of biological role, catalyzes the conversion of lactate to pyruvate. The protein is L-lactate dehydrogenase of Chloroherpeton thalassium (strain ATCC 35110 / GB-78).